We begin with the raw amino-acid sequence, 505 residues long: Cobyric acid synthase (505 aa).

One can recognise a GATase cobBQ-type domain in the interval Asp251–Phe444. Cys332 serves as the catalytic Nucleophile. His436 is a catalytic residue.

This sequence belongs to the CobB/CobQ family. CobQ subfamily.

The protein operates within cofactor biosynthesis; adenosylcobalamin biosynthesis. In terms of biological role, catalyzes amidations at positions B, D, E, and G on adenosylcobyrinic A,C-diamide. NH(2) groups are provided by glutamine, and one molecule of ATP is hydrogenolyzed for each amidation. The protein is Cobyric acid synthase of Clostridium novyi (strain NT).